The following is a 372-amino-acid chain: NAD(P)H-quinone oxidoreductase subunit 1 (372 aa).

Helical transmembrane passes span 31–51 (PLPM…VVWL), 65–85 (PEFI…KLVL), 97–117 (LLFT…YLIL), 128–148 (VGLG…GLLM), 176–196 (LALS…VDIV), 254–276 (FALF…AVLY), 304–324 (LIFA…LIFL), and 347–367 (FLLP…LAFP).

The protein belongs to the complex I subunit 1 family. As to quaternary structure, NDH-1 is composed of at least 11 different subunits.

Its subcellular location is the cellular thylakoid membrane. The enzyme catalyses a plastoquinone + NADH + (n+1) H(+)(in) = a plastoquinol + NAD(+) + n H(+)(out). It catalyses the reaction a plastoquinone + NADPH + (n+1) H(+)(in) = a plastoquinol + NADP(+) + n H(+)(out). In terms of biological role, NDH-1 shuttles electrons from an unknown electron donor, via FMN and iron-sulfur (Fe-S) centers, to quinones in the respiratory and/or the photosynthetic chain. The immediate electron acceptor for the enzyme in this species is believed to be plastoquinone. Couples the redox reaction to proton translocation, and thus conserves the redox energy in a proton gradient. The sequence is that of NAD(P)H-quinone oxidoreductase subunit 1 from Leptolyngbya boryana (Plectonema boryanum).